A 521-amino-acid chain; its full sequence is Maturase K (521 aa).

This sequence belongs to the intron maturase 2 family. MatK subfamily.

The protein localises to the plastid. It is found in the chloroplast. Its function is as follows. Usually encoded in the trnK tRNA gene intron. Probably assists in splicing its own and other chloroplast group II introns. This is Maturase K from Trillium catesbaei (Catesby's trillium).